Reading from the N-terminus, the 437-residue chain is MRASVVLTCYCWLLVRVSSIHPECRFHLEIQEEETKCAELLSSQMENHRACSGVWDNITCWRPADIGETVTVPCPKVFSNFYSRPGNISKNCTSDGWSETFPDFIDACGYNDPEDESKITFYILVKAIYTLGYSVSLMSLTTGSIIICLFRKLHCTRNYIHLNLFLSFMLRAISVLVKDSVLYSSSGTLRCHDQPGSWVGCKLSLVFFQYCIMANFYWLLVEGLYLHTLLVAILPPSRCFLAYLLIGWGIPSVCIGAWIATRLSLEDTGCWDTNDHSIPWWVIRMPILISIVVNFALFISIVRILLQKLTSPDVGGNDQSQYKRLAKSTLLLIPLFGVHYMVFAAFPIGISSTYQILFELCVGSFQGLVVAVLYCFLNSEVQCELKRRWRGLCLTQPGSRDYRLHSWSMSRNGSESALQIHRGSRTQSFLQSETSVI.

The N-terminal stretch at 1-22 (MRASVVLTCYCWLLVRVSSIHP) is a signal peptide. The Extracellular segment spans residues 23-123 (ECRFHLEIQE…EDESKITFYI (101 aa)). Disulfide bonds link C37/C60, C51/C92, and C74/C108. N-linked (GlcNAc...) asparagine glycans are attached at residues N57, N87, and N91. A helical transmembrane segment spans residues 124-149 (LVKAIYTLGYSVSLMSLTTGSIIICL). Residues 150–157 (FRKLHCTR) are Cytoplasmic-facing. Residues 158–179 (NYIHLNLFLSFMLRAISVLVKD) traverse the membrane as a helical segment. Topologically, residues 180–202 (SVLYSSSGTLRCHDQPGSWVGCK) are extracellular. Residues C201 and C270 are joined by a disulfide bond. Residues 203–227 (LSLVFFQYCIMANFYWLLVEGLYLH) form a helical membrane-spanning segment. Over 228–238 (TLLVAILPPSR) the chain is Cytoplasmic. Residues 239 to 260 (CFLAYLLIGWGIPSVCIGAWIA) form a helical membrane-spanning segment. Residues 261–279 (TRLSLEDTGCWDTNDHSIP) are Extracellular-facing. A helical transmembrane segment spans residues 280 to 303 (WWVIRMPILISIVVNFALFISIVR). The Cytoplasmic segment spans residues 304–324 (ILLQKLTSPDVGGNDQSQYKR). Residues 325 to 345 (LAKSTLLLIPLFGVHYMVFAA) traverse the membrane as a helical segment. Over 346–353 (FPIGISST) the chain is Extracellular. Residues 354–377 (YQILFELCVGSFQGLVVAVLYCFL) form a helical membrane-spanning segment. The Cytoplasmic segment spans residues 378–437 (NSEVQCELKRRWRGLCLTQPGSRDYRLHSWSMSRNGSESALQIHRGSRTQSFLQSETSVI).

Belongs to the G-protein coupled receptor 2 family. In terms of assembly, interacts with ADCYAP1/PACAP (via N-terminal extracellular domain); activated by PACAP27 and CAPAC38 neuropeptides. Interacts with VIP; the interaction results in VIPR1 activation. In terms of tissue distribution, mainly in the thalamus, hippocampus and in the suprachiasmatic nucleus.

It is found in the cell membrane. Functionally, g protein-coupled receptor activated by the neuropeptides vasoactive intestinal peptide (VIP) and pituitary adenylate cyclase-activating polypeptide (ADCYAP1/PACAP). Binds VIP and both PACAP27 and PACAP38 bioactive peptides with the order of ligand affinity of VIP = PACAP38 &gt; PACAP27. Ligand binding causes a conformation change that triggers signaling via guanine nucleotide-binding proteins (G proteins) and modulates the activity of downstream effectors. Activates cAMP-dependent pathway. May be coupled to phospholipase C. The protein is Vasoactive intestinal polypeptide receptor 2 of Rattus norvegicus (Rat).